Here is a 203-residue protein sequence, read N- to C-terminus: MGEEVQIGATAVGIKAKDGVVLAAEKRVSYGFYTLSSAGRKVFVIDDKLAIASAGIIADMQSLARIVKINAKAYELETRKKPTVRSMAKLLSVIMFSRRYMPFFAEVLVGGVDEEGSHLIVMDPLGSLIEDNYAALGTGAKLAISVLDTGYREDITLQDAKKLAVKALKAAIERDPVSGGGIDLVLIDQTGAKEEEVKVQLLI.

The propeptide at M1 to A9 is removed in mature form; by autocatalysis. The Nucleophile role is filled by T10.

It belongs to the peptidase T1B family. As to quaternary structure, the 20S proteasome core is composed of 14 alpha and 14 beta subunits that assemble into four stacked heptameric rings, resulting in a barrel-shaped structure. The two inner rings, each composed of seven catalytic beta subunits, are sandwiched by two outer rings, each composed of seven alpha subunits. The catalytic chamber with the active sites is on the inside of the barrel. Has a gated structure, the ends of the cylinder being occluded by the N-termini of the alpha-subunits. Is capped at one or both ends by the proteasome regulatory ATPase, PAN.

The protein localises to the cytoplasm. The enzyme catalyses Cleavage of peptide bonds with very broad specificity.. Its activity is regulated as follows. The formation of the proteasomal ATPase PAN-20S proteasome complex, via the docking of the C-termini of PAN into the intersubunit pockets in the alpha-rings, triggers opening of the gate for substrate entry. Interconversion between the open-gate and close-gate conformations leads to a dynamic regulation of the 20S proteasome proteolysis activity. Component of the proteasome core, a large protease complex with broad specificity involved in protein degradation. The sequence is that of Proteasome subunit beta 2 from Pyrobaculum arsenaticum (strain DSM 13514 / JCM 11321 / PZ6).